The sequence spans 155 residues: SsrA-binding protein (155 aa).

It belongs to the SmpB family.

It localises to the cytoplasm. Required for rescue of stalled ribosomes mediated by trans-translation. Binds to transfer-messenger RNA (tmRNA), required for stable association of tmRNA with ribosomes. tmRNA and SmpB together mimic tRNA shape, replacing the anticodon stem-loop with SmpB. tmRNA is encoded by the ssrA gene; the 2 termini fold to resemble tRNA(Ala) and it encodes a 'tag peptide', a short internal open reading frame. During trans-translation Ala-aminoacylated tmRNA acts like a tRNA, entering the A-site of stalled ribosomes, displacing the stalled mRNA. The ribosome then switches to translate the ORF on the tmRNA; the nascent peptide is terminated with the 'tag peptide' encoded by the tmRNA and targeted for degradation. The ribosome is freed to recommence translation, which seems to be the essential function of trans-translation. The polypeptide is SsrA-binding protein (Geobacillus thermodenitrificans (strain NG80-2)).